The sequence spans 553 residues: Putative transport protein YidE (553 aa).

Helical transmembrane passes span 4–24 (IALTVSILALVAVVGLFIGNV), 28–48 (GVGLGIGGVLFGGIIVGHFVS), 65–85 (FGLILFVYTIGIQVGPGFFAS), 95–115 (LFAVLIVIIGGLVTAILHKLF), and 158–178 (MSYAMAYPFGICGILFTMWML). 2 consecutive RCK C-terminal domains span residues 191–276 (QQHE…VIGQ) and 279–361 (DTSL…VLGN). 6 helical membrane passes run 371–391 (MLPVFIGIGLGVLLGSIPVFV), 393–413 (GFPAALKLGLAGGPLIMALIL), 439–459 (IVLFLSVVGLKSGGDFIHTLV), 464–484 (LSWIGYGALITAVPLITVGIL), 493–513 (YLTMCGMLAGSMTDPPALAFA), and 533–553 (LVMFLRIITPQLLAVLFWSIG).

This sequence belongs to the AAE transporter (TC 2.A.81) family. YidE subfamily.

Its subcellular location is the cell membrane. The chain is Putative transport protein YidE from Escherichia coli O6:K15:H31 (strain 536 / UPEC).